A 127-amino-acid chain; its full sequence is MORF4 family-associated protein 1 (127 aa).

Residues 92 to 126 (RAAKRCEKAEEKAKEIAKMAEMLVELVRRIEKSES) adopt a coiled-coil conformation.

Belongs to the MORF4 family-associated protein family. As to quaternary structure, found in a complex composed of MORF4L1, MRFAP1 and RB1. Interacts via its N-terminus with MORF4L1. Interacts with CSTB and MORF4L2.

It localises to the nucleus. It is found in the cytoplasm. The protein resides in the perinuclear region. The protein is MORF4 family-associated protein 1 of Homo sapiens (Human).